The sequence spans 363 residues: Ribosomal RNA large subunit methyltransferase M (363 aa).

S-adenosyl-L-methionine contacts are provided by residues Ser-190, 223 to 226 (CPGG), Asp-242, Asp-262, and Asp-279. Catalysis depends on Lys-308, which acts as the Proton acceptor.

This sequence belongs to the class I-like SAM-binding methyltransferase superfamily. RNA methyltransferase RlmE family. RlmM subfamily. Monomer.

Its subcellular location is the cytoplasm. The catalysed reaction is cytidine(2498) in 23S rRNA + S-adenosyl-L-methionine = 2'-O-methylcytidine(2498) in 23S rRNA + S-adenosyl-L-homocysteine + H(+). Functionally, catalyzes the 2'-O-methylation at nucleotide C2498 in 23S rRNA. The polypeptide is Ribosomal RNA large subunit methyltransferase M (Vibrio vulnificus (strain CMCP6)).